The chain runs to 21 residues: uncharacterized protein (21 aa).

This is an uncharacterized protein from Haemophilus influenzae (strain ATCC 51907 / DSM 11121 / KW20 / Rd).